Here is a 469-residue protein sequence, read N- to C-terminus: SSLSVLVLSLSFAYCLSAPVPQDEDSELTPGDLQLAEHYLNRLYSSSSNPVGMLRMKNVNSIETKLKEMQSFFGLEVTGKLNEDTLDIMKQPRCGVPDVGQYNFFPRKLKWPRNNLTYRIVNYTPDLSTSEVDRAIKKALKVWSDVTPLNFTRLRTGTADIMVSFGKKEHGDYYPFDGPDGLLAHAFPPGEKLGGDTHFDDDEMFSTDNKGYNLFVVAAHEFGHALGLDHSRDPGSLMFPVYTYTETSRFVLPDDDVQGIQVLYGPGNRDPHPKHPKTPEKCDPDLSIDAITELRGEKMIFKDRFFWRVHPQMTDAELVLIKSFWPELPNKLDAAYEHPAKDLSYLFRGKKFWALNGYDIVEDYPKKLHELGFPKTLKAIDAAVYNKDTGKTFFFTEDSYWSFDEEARTLDKGFPRLISEDFPGIGEKVDAAYQRNGYLYFFNGALQFEYSIWSQRITRILKTNFVLMC.

The signal sequence occupies residues 1 to 17; sequence SSLSVLVLSLSFAYCLS. Residues 18–100 constitute a propeptide, activation peptide; it reads APVPQDEDSE…QPRCGVPDVG (83 aa). The short motif at 92 to 99 is the Cysteine switch element; that stretch reads PRCGVPDV. C94 provides a ligand contact to Zn(2+). The N-linked (GlcNAc...) asparagine glycan is linked to N115. Residue D126 coordinates Ca(2+). N-linked (GlcNAc...) asparagine glycosylation is present at N150. D160 contacts Ca(2+). Zn(2+) is bound by residues H170 and D172. Residues D177, G178, and L182 each coordinate Ca(2+). H185 serves as a coordination point for Zn(2+). Ca(2+) contacts are provided by G194 and D196. Residue H198 coordinates Zn(2+). D200, D201, and E203 together coordinate Ca(2+). A Zn(2+)-binding site is contributed by H220. E221 is a catalytic residue. Zn(2+)-binding residues include H224, H230, and M238. Residues 266–469 form an interaction with collagen region; that stretch reads PGNRDPHPKH…ILKTNFVLMC (204 aa). 4 Hemopexin repeats span residues 279-328, 329-375, 377-425, and 426-469; these read PEKC…WPEL, PNKL…GFPK, LKAI…FPGI, and GEKV…VLMC. A disulfide bridge connects residues C282 and C469. Ca(2+) is bound by residues D289, I291, D333, A335, A383, and D430.

This sequence belongs to the peptidase M10A family. Requires Ca(2+) as cofactor. The cofactor is Zn(2+). Post-translationally, the proenzyme is activated by removal of the propeptide; this cleavage can be effected by other matrix metalloproteinases and may involve several cleavage steps. Cleavage can also be autocatalytic, after partial maturation by another protease or after treatment with 4-aminophenylmercuric acetate (APMA) (in vitro).

The protein localises to the secreted. It localises to the extracellular space. The protein resides in the extracellular matrix. Functionally, plays a role in the degradation of extracellular matrix proteins including fibrillar collagen, fibronectin, TNC and ACAN. Cleaves several types of triple helical collagen. May also function by activating or degrading key regulatory proteins. Plays a role in wound healing, tissue remodeling, cartilage degradation, bone development, bone mineralization and ossification. This chain is Collagenase 3 (mmp13), found in Xenopus laevis (African clawed frog).